A 271-amino-acid polypeptide reads, in one-letter code: Tryptophan synthase alpha chain (271 aa).

Residues E49 and D60 each act as proton acceptor in the active site.

This sequence belongs to the TrpA family. Tetramer of two alpha and two beta chains.

The catalysed reaction is (1S,2R)-1-C-(indol-3-yl)glycerol 3-phosphate + L-serine = D-glyceraldehyde 3-phosphate + L-tryptophan + H2O. Its pathway is amino-acid biosynthesis; L-tryptophan biosynthesis; L-tryptophan from chorismate: step 5/5. Its function is as follows. The alpha subunit is responsible for the aldol cleavage of indoleglycerol phosphate to indole and glyceraldehyde 3-phosphate. The protein is Tryptophan synthase alpha chain of Burkholderia pseudomallei (strain 1106a).